Here is a 299-residue protein sequence, read N- to C-terminus: UTP--glucose-1-phosphate uridylyltransferase (299 aa).

This sequence belongs to the UDPGP type 2 family.

The enzyme catalyses alpha-D-glucose 1-phosphate + UTP + H(+) = UDP-alpha-D-glucose + diphosphate. It participates in carbohydrate metabolism; nucleotide-sugar metabolism. It functions in the pathway capsule biogenesis; capsule polysaccharide biosynthesis. This Streptococcus pneumoniae serotype 4 (strain ATCC BAA-334 / TIGR4) protein is UTP--glucose-1-phosphate uridylyltransferase (cap4C).